Consider the following 604-residue polypeptide: Elongation factor 4 (604 aa).

Residues 2-184 enclose the tr-type G domain; the sequence is DHIRNFSIIA…AVITRMPAPR (183 aa). Residues 14–19 and 131–134 each bind GTP; these read DHGKST and NKMD.

Belongs to the TRAFAC class translation factor GTPase superfamily. Classic translation factor GTPase family. LepA subfamily.

The protein resides in the cell inner membrane. It carries out the reaction GTP + H2O = GDP + phosphate + H(+). In terms of biological role, required for accurate and efficient protein synthesis under certain stress conditions. May act as a fidelity factor of the translation reaction, by catalyzing a one-codon backward translocation of tRNAs on improperly translocated ribosomes. Back-translocation proceeds from a post-translocation (POST) complex to a pre-translocation (PRE) complex, thus giving elongation factor G a second chance to translocate the tRNAs correctly. Binds to ribosomes in a GTP-dependent manner. The chain is Elongation factor 4 from Methylibium petroleiphilum (strain ATCC BAA-1232 / LMG 22953 / PM1).